A 70-amino-acid chain; its full sequence is Sec-independent protein translocase protein TatA (70 aa).

The chain crosses the membrane as a helical span at residues 1–21 (MGSFSIWHWLIVLVVVLLIFG). The disordered stretch occupies residues 46-70 (DAPKISESDKGGHTIDAEVKDKQNS).

Belongs to the TatA/E family. In terms of assembly, the Tat system comprises two distinct complexes: a TatABC complex, containing multiple copies of TatA, TatB and TatC subunits, and a separate TatA complex, containing only TatA subunits. Substrates initially bind to the TatABC complex, which probably triggers association of the separate TatA complex to form the active translocon.

It is found in the cell inner membrane. Functionally, part of the twin-arginine translocation (Tat) system that transports large folded proteins containing a characteristic twin-arginine motif in their signal peptide across membranes. TatA could form the protein-conducting channel of the Tat system. This Thiobacillus denitrificans (strain ATCC 25259 / T1) protein is Sec-independent protein translocase protein TatA.